A 58-amino-acid polypeptide reads, in one-letter code: Small ribosomal subunit protein bS21 (58 aa).

The tract at residues 35 to 58 is disordered; it reads REHYEKPSVKKKKKSEAARKRKFK. Residues 43–58 show a composition bias toward basic residues; the sequence is VKKKKKSEAARKRKFK.

Belongs to the bacterial ribosomal protein bS21 family.

In Clostridium botulinum (strain Alaska E43 / Type E3), this protein is Small ribosomal subunit protein bS21.